The sequence spans 197 residues: uncharacterized protein (197 aa).

A run of 4 helical transmembrane segments spans residues 11-31 (IALIVVGIIALFLPWLTISAS), 85-105 (STFMMIFGIIPIILYIASIFV), 109-129 (AVVVGAGIAGITCASIFVVLF), and 174-194 (VGTGWYLTMIIGLALIAYPFI).

The protein resides in the cell membrane. This is an uncharacterized protein from Methanocaldococcus jannaschii (strain ATCC 43067 / DSM 2661 / JAL-1 / JCM 10045 / NBRC 100440) (Methanococcus jannaschii).